Here is a 232-residue protein sequence, read N- to C-terminus: Octanoyltransferase (232 aa).

In terms of domain architecture, BPL/LPL catalytic spans 43–231; the sequence is LPTSNYLLFV…HLTHLFEAEI (189 aa). Substrate is bound by residues 88–95, 160–162, and 173–175; these read RGGDITYH, AMG, and GFA. Catalysis depends on Cys-191, which acts as the Acyl-thioester intermediate.

Belongs to the LipB family.

It is found in the cytoplasm. The catalysed reaction is octanoyl-[ACP] + L-lysyl-[protein] = N(6)-octanoyl-L-lysyl-[protein] + holo-[ACP] + H(+). It participates in protein modification; protein lipoylation via endogenous pathway; protein N(6)-(lipoyl)lysine from octanoyl-[acyl-carrier-protein]: step 1/2. In terms of biological role, catalyzes the transfer of endogenously produced octanoic acid from octanoyl-acyl-carrier-protein onto the lipoyl domains of lipoate-dependent enzymes. Lipoyl-ACP can also act as a substrate although octanoyl-ACP is likely to be the physiological substrate. In Flavobacterium johnsoniae (strain ATCC 17061 / DSM 2064 / JCM 8514 / BCRC 14874 / CCUG 350202 / NBRC 14942 / NCIMB 11054 / UW101) (Cytophaga johnsonae), this protein is Octanoyltransferase.